A 139-amino-acid chain; its full sequence is Ribulose bisphosphate carboxylase small subunit (139 aa).

This sequence belongs to the RuBisCO small chain family. Heterohexadecamer of 8 large and 8 small subunits.

It localises to the plastid. The protein resides in the chloroplast. RuBisCO catalyzes two reactions: the carboxylation of D-ribulose 1,5-bisphosphate, the primary event in carbon dioxide fixation, as well as the oxidative fragmentation of the pentose substrate in the photorespiration process. Both reactions occur simultaneously and in competition at the same active site. Although the small subunit is not catalytic it is essential for maximal activity. The polypeptide is Ribulose bisphosphate carboxylase small subunit (Olisthodiscus luteus (Marine phytoflagellate)).